The following is a 185-amino-acid chain: Ribosome-recycling factor (185 aa).

The protein belongs to the RRF family.

The protein localises to the cytoplasm. In terms of biological role, responsible for the release of ribosomes from messenger RNA at the termination of protein biosynthesis. May increase the efficiency of translation by recycling ribosomes from one round of translation to another. The protein is Ribosome-recycling factor of Roseiflexus castenholzii (strain DSM 13941 / HLO8).